A 378-amino-acid polypeptide reads, in one-letter code: SWI/SNF-related matrix-associated actin-dependent regulator of chromatin subfamily B member 1 (378 aa).

Positions 1–106 (MIMALSKTFG…DEKYKAVSIS (106 aa)) are DNA-binding.

It belongs to the SNF5 family. In terms of assembly, component of the multiprotein chromatin-remodeling complexes SWI/SNF. Component of neural progenitors-specific chromatin remodeling complex (npBAF complex) and the neuron-specific chromatin remodeling complex (nBAF complex). Component of the BAF (SWI/SNF) chromatin remodeling complex. Component of the SWI/SNF-B (PBAF) chromatin remodeling complex. Binds to double-stranded DNA.

Its subcellular location is the nucleus. Involved in chromatin-remodeling. Core component of the BAF (SWI/SNF) complex. This ATP-dependent chromatin-remodeling complex plays important roles in cell proliferation and differentiation, in cellular antiviral activities and inhibition of tumor formation. Belongs to the neural progenitors-specific chromatin remodeling complex (npBAF complex) and the neuron-specific chromatin remodeling complex (nBAF complex) and may play a role in neural development. The sequence is that of SWI/SNF-related matrix-associated actin-dependent regulator of chromatin subfamily B member 1 (smarcb1) from Xenopus laevis (African clawed frog).